Reading from the N-terminus, the 161-residue chain is Blue copper protein 1a (161 aa).

A signal peptide spans 1-23; the sequence is MASSRVVLILSISMVLLSSVAIA. Residues 24-124 form the Phytocyanin domain; it reads TDHIVGDDKG…QMKLVITVLA (101 aa). Position 64 (histidine 64) interacts with Cu cation. Asparagine 70 carries an N-linked (GlcNAc...) asparagine glycan. A disulfide bridge links cysteine 77 with cysteine 111. Cu cation contacts are provided by cysteine 105, histidine 110, and methionine 116. Residues 141 to 161 traverse the membrane as a helical segment; the sequence is VVSSLFGVVMAIMVAIAVIFA.

It localises to the membrane. The chain is Blue copper protein 1a from Medicago truncatula (Barrel medic).